The primary structure comprises 136 residues: Peptide methionine sulfoxide reductase MsrB (136 aa).

A MsrB domain is found at 9 to 136; sequence DAEWKALLAE…NSASLDFKKK (128 aa). Zn(2+) is bound by residues C53, C56, C102, and C105. Residue C125 is the Nucleophile of the active site.

The protein belongs to the MsrB Met sulfoxide reductase family. The cofactor is Zn(2+).

It carries out the reaction L-methionyl-[protein] + [thioredoxin]-disulfide + H2O = L-methionyl-(R)-S-oxide-[protein] + [thioredoxin]-dithiol. The protein is Peptide methionine sulfoxide reductase MsrB of Variovorax paradoxus (strain S110).